Consider the following 273-residue polypeptide: Undecaprenyl-diphosphatase (273 aa).

A run of 7 helical transmembrane segments spans residues 13 to 35 (GLVE…VFGN), 45 to 62 (VFEI…VFEY), 82 to 102 (FVLN…LFDK), 108 to 128 (LFNP…ILWV), 186 to 206 (TEFS…YDVL), 219 to 239 (LILI…KALL), and 250 to 270 (FAYY…SGWI).

Belongs to the UppP family.

Its subcellular location is the cell inner membrane. It catalyses the reaction di-trans,octa-cis-undecaprenyl diphosphate + H2O = di-trans,octa-cis-undecaprenyl phosphate + phosphate + H(+). Its function is as follows. Catalyzes the dephosphorylation of undecaprenyl diphosphate (UPP). Confers resistance to bacitracin. In Neisseria gonorrhoeae (strain NCCP11945), this protein is Undecaprenyl-diphosphatase.